The chain runs to 331 residues: Heat-inducible transcription repressor HrcA (331 aa).

It belongs to the HrcA family.

Its function is as follows. Negative regulator of class I heat shock genes (grpE-dnaK-dnaJ and groELS operons). Prevents heat-shock induction of these operons. This chain is Heat-inducible transcription repressor HrcA, found in Synechococcus sp. (strain WH7803).